A 156-amino-acid chain; its full sequence is Phosphopantetheine adenylyltransferase (156 aa).

Substrate is bound at residue S9. ATP contacts are provided by residues 9 to 10 (SF) and H17. Substrate contacts are provided by K41, I74, and K88. ATP is bound by residues 89–91 (GLR), E99, and 123–129 (LLHVSSS).

This sequence belongs to the bacterial CoaD family. In terms of assembly, homohexamer. Mg(2+) is required as a cofactor.

The protein localises to the cytoplasm. The catalysed reaction is (R)-4'-phosphopantetheine + ATP + H(+) = 3'-dephospho-CoA + diphosphate. Its pathway is cofactor biosynthesis; coenzyme A biosynthesis; CoA from (R)-pantothenate: step 4/5. Its function is as follows. Reversibly transfers an adenylyl group from ATP to 4'-phosphopantetheine, yielding dephospho-CoA (dPCoA) and pyrophosphate. This Kocuria rhizophila (strain ATCC 9341 / DSM 348 / NBRC 103217 / DC2201) protein is Phosphopantetheine adenylyltransferase.